The sequence spans 93 residues: Mammaglobin-A (93 aa).

The first 18 residues, 1–18 (MKLLMVLMLAALSQHCYA), serve as a signal peptide directing secretion. N-linked (GlcNAc...) asparagine glycosylation is found at asparagine 53 and asparagine 68.

Belongs to the secretoglobin family. Lipophilin subfamily. Mammary gland specific. Over-expressed in breast cancer.

It localises to the secreted. This Homo sapiens (Human) protein is Mammaglobin-A (SCGB2A2).